Consider the following 782-residue polypeptide: E3 ubiquitin-protein ligase SopA (782 aa).

Residues 137 to 171 (VSVSANNRPTVSEGRTPPVSPSLSLQATSSPSSPA) are disordered. Residues 157-171 (PSLSLQATSSPSSPA) are compositionally biased toward low complexity. Residue Cys-753 is the Glycyl thioester intermediate of the active site.

It belongs to the SopA E3 ligase family. In terms of processing, ubiquitinated in the presence of host E1 ubiquitin-activating enzyme, E2 ubiquitin-conjugating enzyme and ubiquitin.

Its subcellular location is the secreted. The protein resides in the host cell. It catalyses the reaction S-ubiquitinyl-[E2 ubiquitin-conjugating enzyme]-L-cysteine + [acceptor protein]-L-lysine = [E2 ubiquitin-conjugating enzyme]-L-cysteine + N(6)-ubiquitinyl-[acceptor protein]-L-lysine.. In terms of biological role, effector proteins function to alter host cell physiology and promote bacterial survival in host tissues. This protein is an E3 ubiquitin ligase that interferes with host's ubiquitination pathway. The protein is E3 ubiquitin-protein ligase SopA (sopA) of Salmonella enteritidis PT4 (strain P125109).